A 100-amino-acid polypeptide reads, in one-letter code: Small ribosomal subunit protein uS14c (100 aa).

The protein belongs to the universal ribosomal protein uS14 family. Part of the 30S ribosomal subunit.

The protein localises to the plastid. It is found in the chloroplast. Functionally, binds 16S rRNA, required for the assembly of 30S particles. This is Small ribosomal subunit protein uS14c from Phalaenopsis aphrodite subsp. formosana (Moth orchid).